Consider the following 180-residue polypeptide: Inner membrane assembly complex subunit 17 (180 aa).

The N-terminal 36 residues, 1 to 36, are a transit peptide targeting the mitochondrion; that stretch reads MMIRNQLYRKCIIGGGRSILNGWVINGTVPNIGLRY. Topologically, residues 37-105 are mitochondrial matrix; the sequence is LRSGIVTRSN…RKTQDIPIKR (69 aa). Residues 106–128 form a helical membrane-spanning segment; the sequence is FIRPTWMFLLMSSTFYLLGHYIW. Residues 129–163 are a coiled coil; that stretch reads WKLEYDEVEKELDRQVTALEEELHNLIEEHRVHGE. Residues 129–180 are Mitochondrial intermembrane-facing; it reads WKLEYDEVEKELDRQVTALEEELHNLIEEHRVHGENEAIKNKKHKHWYKFWS.

This sequence belongs to the INA17 family. In terms of assembly, component of the inner membrane assembly (INA) complex, composed of INA17 and INA22. Interacts with a subset of F(1)F(0)-ATP synthase subunits of the F(1)-domain and the peripheral stalk.

The protein resides in the mitochondrion inner membrane. Functionally, component of the INA complex (INAC) that promotes the biogenesis of mitochondrial F(1)F(0)-ATP synthase. INAC facilitates the assembly of the peripheral stalk and promotes the assembly of the catalytic F(1)-domain with the membrane-embedded F(0)-domain. The polypeptide is Inner membrane assembly complex subunit 17 (Vanderwaltozyma polyspora (strain ATCC 22028 / DSM 70294 / BCRC 21397 / CBS 2163 / NBRC 10782 / NRRL Y-8283 / UCD 57-17) (Kluyveromyces polysporus)).